The sequence spans 379 residues: Gonadotropin-releasing hormone II receptor (379 aa).

Residues Met1–Arg40 are Extracellular-facing. A helical transmembrane segment spans residues Val41–Trp60. At Ser61 to Arg76 the chain is on the cytoplasmic side. A helical transmembrane segment spans residues Thr77–Leu96. Residues Asp97–Arg114 are Extracellular-facing. The N-linked (GlcNAc...) asparagine glycan is linked to Asn101. An intrachain disulfide couples Cys113 to Cys188. The chain crosses the membrane as a helical span at residues Thr115–Leu136. At Asp137–Trp160 the chain is on the cytoplasmic side. A helical membrane pass occupies residues Gly161 to His178. Over Arg179–Asn204 the chain is Extracellular. Residues Leu205–Ser224 traverse the membrane as a helical segment. The Cytoplasmic segment spans residues His225 to Thr278. Residues Pro279–Val297 traverse the membrane as a helical segment. Topologically, residues Pro298–His303 are extracellular. The chain crosses the membrane as a helical span at residues Ile304–Phe323. The Cytoplasmic portion of the chain corresponds to Thr324–Ile379.

Belongs to the G-protein coupled receptor 1 family. Post-translationally, phosphorylated on the C-terminal cytoplasmic tail.

It is found in the cell membrane. Receptor for gonadotropin releasing hormone II (GnRH II). This receptor mediates its action by association with G proteins that activate a phosphatidylinositol-calcium second messenger system. The chain is Gonadotropin-releasing hormone II receptor (GNRHR2) from Macaca mulatta (Rhesus macaque).